The chain runs to 560 residues: Formate--tetrahydrofolate ligase (560 aa).

Residue 69–76 coordinates ATP; that stretch reads TPAGEGKS.

The protein belongs to the formate--tetrahydrofolate ligase family.

It carries out the reaction (6S)-5,6,7,8-tetrahydrofolate + formate + ATP = (6R)-10-formyltetrahydrofolate + ADP + phosphate. It participates in one-carbon metabolism; tetrahydrofolate interconversion. The chain is Formate--tetrahydrofolate ligase from Bacillus pumilus (strain SAFR-032).